A 560-amino-acid chain; its full sequence is Cytosolic purine 5'-nucleotidase (560 aa).

D52 functions as the Nucleophile in the catalytic mechanism. The IMP site is built by D52 and D54. The Mg(2+) site is built by D52 and D54. The Proton donor role is filled by D54. ATP contacts are provided by R144 and N154. Residues R202, D206, K215, T249, N250, S251, and K292 each coordinate IMP. D351 is a Mg(2+) binding site. The residue at position 418 (S418) is a Phosphoserine. The ATP site is built by Q453 and R456. Residues S502, S511, and S527 each carry the phosphoserine modification. Residues 541–560 form a disordered region; it reads PQEITHCHDEDDDEEEEEEE. Positions 548-560 are required for tetramer assembly; sequence HDEDDDEEEEEEE. The span at 550–560 shows a compositional bias: acidic residues; that stretch reads EDDDEEEEEEE.

This sequence belongs to the 5'(3')-deoxyribonucleotidase family. Homotetramer. The cofactor is Mg(2+).

The protein resides in the cytoplasm. It is found in the cytosol. The catalysed reaction is a ribonucleoside 5'-phosphate + H2O = a ribonucleoside + phosphate. The enzyme catalyses a 2'-deoxyribonucleoside + a ribonucleoside 5'-phosphate = a ribonucleoside + a 2'-deoxyribonucleoside 5'-phosphate. It catalyses the reaction IMP + H2O = inosine + phosphate. It carries out the reaction GMP + H2O = guanosine + phosphate. The catalysed reaction is dIMP + H2O = 2'-deoxyinosine + phosphate. The enzyme catalyses dGMP + H2O = 2'-deoxyguanosine + phosphate. It catalyses the reaction XMP + H2O = xanthosine + phosphate. It carries out the reaction inosine + GMP = guanosine + IMP. The catalysed reaction is dGMP + inosine = 2'-deoxyguanosine + IMP. The enzyme catalyses dIMP + inosine = 2'-deoxyinosine + IMP. It catalyses the reaction inosine + UMP = uridine + IMP. It carries out the reaction inosine + CMP = cytidine + IMP. The catalysed reaction is inosine + AMP = IMP + adenosine. With respect to regulation, allosterically activated by various compounds including ATP, 2,3-BPG/2,3-Bisphosphoglyceric acid and Ap4A/P1,P4-bis(5'-adenosyl) tetraphosphate. Binding of an allosteric activator is a prerequisiste to magnesium and substrate binding. Inhibited by inorganic phosphate. Functionally, broad specificity cytosolic 5'-nucleotidase that catalyzes the dephosphorylation of 6-hydroxypurine nucleoside 5'-monophosphates. In addition, possesses a phosphotransferase activity by which it can transfer a phosphate from a donor nucleoside monophosphate to an acceptor nucleoside, preferably inosine, deoxyinosine and guanosine. Has the highest activities for IMP and GMP followed by dIMP, dGMP and XMP. Could also catalyze the transfer of phosphates from pyrimidine monophosphates but with lower efficiency. Through these activities regulates the purine nucleoside/nucleotide pools within the cell. The sequence is that of Cytosolic purine 5'-nucleotidase from Rattus norvegicus (Rat).